A 289-amino-acid chain; its full sequence is Acetyl-coenzyme A carboxylase carboxyl transferase subunit beta (289 aa).

Residues 28–289 enclose the CoA carboxyltransferase N-terminal domain; that stretch reads LWSKCPSCEA…ALLQKLPAAA (262 aa). Residues Cys-32, Cys-35, Cys-51, and Cys-54 each coordinate Zn(2+). The C4-type zinc finger occupies 32–54; sequence CPSCEAVLYATDLENNLQVCPKC.

This sequence belongs to the AccD/PCCB family. In terms of assembly, acetyl-CoA carboxylase is a heterohexamer composed of biotin carboxyl carrier protein (AccB), biotin carboxylase (AccC) and two subunits each of ACCase subunit alpha (AccA) and ACCase subunit beta (AccD). Zn(2+) is required as a cofactor.

Its subcellular location is the cytoplasm. The enzyme catalyses N(6)-carboxybiotinyl-L-lysyl-[protein] + acetyl-CoA = N(6)-biotinyl-L-lysyl-[protein] + malonyl-CoA. The protein operates within lipid metabolism; malonyl-CoA biosynthesis; malonyl-CoA from acetyl-CoA: step 1/1. Functionally, component of the acetyl coenzyme A carboxylase (ACC) complex. Biotin carboxylase (BC) catalyzes the carboxylation of biotin on its carrier protein (BCCP) and then the CO(2) group is transferred by the transcarboxylase to acetyl-CoA to form malonyl-CoA. The sequence is that of Acetyl-coenzyme A carboxylase carboxyl transferase subunit beta from Dechloromonas aromatica (strain RCB).